Reading from the N-terminus, the 193-residue chain is Ribosomal RNA small subunit methyltransferase G (193 aa).

Residues Gly62, Phe67, 111–112, and Arg125 contribute to the S-adenosyl-L-methionine site; that span reads IE.

This sequence belongs to the methyltransferase superfamily. RNA methyltransferase RsmG family.

The protein localises to the cytoplasm. The catalysed reaction is guanosine(527) in 16S rRNA + S-adenosyl-L-methionine = N(7)-methylguanosine(527) in 16S rRNA + S-adenosyl-L-homocysteine. Functionally, specifically methylates the N7 position of guanine in position 527 of 16S rRNA. In Gluconobacter oxydans (strain 621H) (Gluconobacter suboxydans), this protein is Ribosomal RNA small subunit methyltransferase G.